The sequence spans 476 residues: Cytochrome c oxidase subunit 1 (476 aa).

The helical transmembrane segment at 19–39 threads the bilayer; the sequence is LYYLWFSFLFGSYGFLLSVIL. Residue Glu-42 participates in Ca(2+) binding. 8 helical membrane-spanning segments follow: residues 61 to 81, 105 to 125, 151 to 171, 194 to 214, 240 to 260, 278 to 298, 310 to 330, and 345 to 365; these read MIFT…GLFG, ISLL…AAEF, VIIF…LNFI, LIIT…GVLM, LFWF…FGVI, MILA…HHMY, FTST…NWIC, and LLSL…VILG. Residue His-66 coordinates Fe(II)-heme a. A Cu cation-binding site is contributed by His-246. A cross-link (1'-histidyl-3'-tyrosine (His-Tyr)) is located at residues 246 to 250; the sequence is HPEVY. Tyr-250 contributes to the O2 binding site. Cu cation is bound by residues His-295 and His-296. Mg(2+) is bound by residues His-374 and Asp-375. The next 2 membrane-spanning stretches (helical) occupy residues 379 to 399 and 415 to 435; these read VIAH…FTTV and SIVI…FLPM. His-382 is a binding site for heme a3. A Fe(II)-heme a-binding site is contributed by His-384. Pro-448 contacts Ca(2+). Residues 455–475 form a helical membrane-spanning segment; sequence NGWNMICSIGSTMTLFGLLIF.

It belongs to the heme-copper respiratory oxidase family. As to quaternary structure, component of the cytochrome c oxidase (complex IV, CIV), a multisubunit enzyme composed of a catalytic core of 3 subunits and several supernumerary subunits. The complex exists as a monomer or a dimer and forms supercomplexes (SCs) in the inner mitochondrial membrane with ubiquinol-cytochrome c oxidoreductase (cytochrome b-c1 complex, complex III, CIII). It depends on heme as a cofactor. Cu cation serves as cofactor.

Its subcellular location is the mitochondrion inner membrane. It carries out the reaction 4 Fe(II)-[cytochrome c] + O2 + 8 H(+)(in) = 4 Fe(III)-[cytochrome c] + 2 H2O + 4 H(+)(out). It functions in the pathway energy metabolism; oxidative phosphorylation. Component of the cytochrome c oxidase, the last enzyme in the mitochondrial electron transport chain which drives oxidative phosphorylation. The respiratory chain contains 3 multisubunit complexes succinate dehydrogenase (complex II, CII), ubiquinol-cytochrome c oxidoreductase (cytochrome b-c1 complex, complex III, CIII) and cytochrome c oxidase (complex IV, CIV), that cooperate to transfer electrons derived from NADH and succinate to molecular oxygen, creating an electrochemical gradient over the inner membrane that drives transmembrane transport and the ATP synthase. Cytochrome c oxidase is the component of the respiratory chain that catalyzes the reduction of oxygen to water. Electrons originating from reduced cytochrome c in the intermembrane space (IMS) are transferred via the dinuclear copper A center (CU(A)) of subunit 2 and heme A of subunit 1 to the active site in subunit 1, a binuclear center (BNC) formed by heme A3 and copper B (CU(B)). The BNC reduces molecular oxygen to 2 water molecules using 4 electrons from cytochrome c in the IMS and 4 protons from the mitochondrial matrix. The polypeptide is Cytochrome c oxidase subunit 1 (MT-CO1) (Plasmodium falciparum).